Reading from the N-terminus, the 155-residue chain is Interleukin-2 (155 aa).

Positions 1–20 are cleaved as a signal peptide; the sequence is MYKMQLLSCIALTLVLVANS. An O-linked (GalNAc...) threonine glycan is attached at Thr24. Cys79 and Cys127 form a disulfide bridge. Residue Asn112 is glycosylated (N-linked (GlcNAc...) asparagine).

The protein belongs to the IL-2 family.

The protein resides in the secreted. Functionally, cytokine produced by activated CD4-positive helper T-cells and to a lesser extend activated CD8-positive T-cells and natural killer (NK) cells that plays pivotal roles in the immune response and tolerance. Binds to a receptor complex composed of either the high-affinity trimeric IL-2R (IL2RA/CD25, IL2RB/CD122 and IL2RG/CD132) or the low-affinity dimeric IL-2R (IL2RB and IL2RG). Interaction with the receptor leads to oligomerization and conformation changes in the IL-2R subunits resulting in downstream signaling starting with phosphorylation of JAK1 and JAK3. In turn, JAK1 and JAK3 phosphorylate the receptor to form a docking site leading to the phosphorylation of several substrates including STAT5. This process leads to activation of several pathways including STAT, phosphoinositide-3-kinase/PI3K and mitogen-activated protein kinase/MAPK pathways. Functions as a T-cell growth factor and can increase NK-cell cytolytic activity as well. Promotes strong proliferation of activated B-cells and subsequently immunoglobulin production. Plays a pivotal role in regulating the adaptive immune system by controlling the survival and proliferation of regulatory T-cells, which are required for the maintenance of immune tolerance. Moreover, participates in the differentiation and homeostasis of effector T-cell subsets, including Th1, Th2, Th17 as well as memory CD8-positive T-cells. The chain is Interleukin-2 (IL2) from Canis lupus familiaris (Dog).